The chain runs to 431 residues: Peptidase B (431 aa).

Lys196 and Asp201 together coordinate Mn(2+). Lys208 is a catalytic residue. Mn(2+) is bound by residues Asp219, Asp278, and Glu280. Arg282 is a catalytic residue.

This sequence belongs to the peptidase M17 family. Homohexamer. It depends on Mn(2+) as a cofactor.

The protein localises to the cytoplasm. The catalysed reaction is Release of an N-terminal amino acid, Xaa, from a peptide or arylamide. Xaa is preferably Glu or Asp but may be other amino acids, including Leu, Met, His, Cys and Gln.. In terms of biological role, probably plays an important role in intracellular peptide degradation. This is Peptidase B from Serratia proteamaculans (strain 568).